Consider the following 346-residue polypeptide: Phosphoribosylformylglycinamidine cyclo-ligase (346 aa).

Belongs to the AIR synthase family.

Its subcellular location is the cytoplasm. It carries out the reaction 2-formamido-N(1)-(5-O-phospho-beta-D-ribosyl)acetamidine + ATP = 5-amino-1-(5-phospho-beta-D-ribosyl)imidazole + ADP + phosphate + H(+). It participates in purine metabolism; IMP biosynthesis via de novo pathway; 5-amino-1-(5-phospho-D-ribosyl)imidazole from N(2)-formyl-N(1)-(5-phospho-D-ribosyl)glycinamide: step 2/2. In Alteromonas mediterranea (strain DSM 17117 / CIP 110805 / LMG 28347 / Deep ecotype), this protein is Phosphoribosylformylglycinamidine cyclo-ligase.